Reading from the N-terminus, the 240-residue chain is MINAEPIISKMKNQKINYDKVLKKLIGQWEREAIRPKILLHSCCAPCSTYTLEFLTQYADIAIYFANSNIHPKNEYLRRAKVQEQFVEDFNRKTGANVKYIEAPYEPHKFVKMVKDKELADEKEGGLRCTACFEMRLDIVAKAAVEHGYDYFGSAITLSPKKNAQLINELGMDVQKIYDVNYLPSDFKKSKGYERSIEMCNDYNIFRQCYCGCVFAAMQQGIDFKTVNKEAKAFLEQYPD.

[4Fe-4S] cluster-binding residues include Cys-43, Cys-44, Cys-129, and Cys-132. Cysteines 211 and 213 form a disulfide.

This sequence belongs to the QueH family.

The catalysed reaction is epoxyqueuosine(34) in tRNA + AH2 = queuosine(34) in tRNA + A + H2O. It functions in the pathway tRNA modification; tRNA-queuosine biosynthesis. Catalyzes the conversion of epoxyqueuosine (oQ) to queuosine (Q), which is a hypermodified base found in the wobble positions of tRNA(Asp), tRNA(Asn), tRNA(His) and tRNA(Tyr). The protein is Epoxyqueuosine reductase QueH of Staphylococcus aureus (strain Mu50 / ATCC 700699).